The primary structure comprises 993 residues: P3N-PIPO polyprotein (993 aa).

The Peptidase S30 domain occupies 154–298; it reads GVTPYSVQQL…ESTMLSTHHY (145 aa). Active-site for P1 proteinase activity residues include H207, D216, and S249. Positions 349-352 match the Involved in interaction with stylet and aphid transmission motif; that stretch reads KITC. An Involved in virions binding and aphid transmission motif is present at residues 607 to 609; the sequence is PTK. One can recognise a Peptidase C6 domain in the interval 633–755; that stretch reads MYIAKSGYCY…DSEMKHYRVG (123 aa). Catalysis depends on for helper component proteinase activity residues C641 and H714.

It belongs to the potyviridae P3N-PIPO polyprotein family. In terms of assembly, interacts (via PIPO domain) with host PCaP1 protein; this interaction may help to anchor the movement complex to the plasma membrane from which the complex could move to the plasmodesmata. Potyviral RNA is expressed as two polyproteins which undergo post-translational proteolytic processing. Genome polyprotein is processed by NIa-pro, P1 and HC-pro proteinases resulting in the production of at least ten individual proteins. P3N-PIPO is cleaved by P1 and HC-pro proteinases resulting in the production of three individual proteins. The P1 proteinase and the HC-pro cleave only their respective C-termini autocatalytically.

It localises to the host cell junction. The protein localises to the host plasmodesma. It carries out the reaction Hydrolyzes a Gly-|-Gly bond at its own C-terminus, commonly in the sequence -Tyr-Xaa-Val-Gly-|-Gly, in the processing of the potyviral polyprotein.. In terms of biological role, required for aphid transmission and also has proteolytic activity. Only cleaves a Gly-Gly dipeptide at its own C-terminus. Interacts with virions and aphid stylets. Acts as a suppressor of RNA-mediated gene silencing, also known as post-transcriptional gene silencing (PTGS), a mechanism of plant viral defense that limits the accumulation of viral RNAs. May have RNA-binding activity. Functionally, allows efficient cell to cell propagation, by bypassing the host cell wall barrier. Transports viral genome to neighboring plant cells directly through plasmosdesmata, without any budding. This Solanum betaceum (Tamarillo) protein is P3N-PIPO polyprotein.